The following is a 619-amino-acid chain: Kinesin light chain 4 (619 aa).

Residue serine 2 is modified to N-acetylserine. The stretch at 32 to 150 forms a coiled coil; it reads GLESLHSEHQ…EEEKKHLEFL (119 aa). The stretch at 55–88 is one TPR 1 repeat; that stretch reads QQGGHEEGLVHEKARQLRRSMENIELGLSEAQVM. Positions 156 to 175 are enriched in basic and acidic residues; it reads YDEDGHSMEEKEGDASKDSL. Positions 156-200 are disordered; it reads YDEDGHSMEEKEGDASKDSLDDLFPNEEEEDSSNDLSRGQGAAAA. A Phosphoserine modification is found at serine 174. Over residues 179 to 188 the composition is skewed to acidic residues; it reads FPNEEEEDSS. TPR repeat units follow at residues 211-244, 253-286, 295-328, 337-370, and 379-412; these read LRTL…LERT, ATML…REST, AATL…REKV, AKQL…YERQ, and ARTK…AHVQ. Serine 460 carries the phosphoserine modification. The stretch at 464–497 is one TPR 7 repeat; that stretch reads NTTLRNLGALYRRQGKLEAAETLEECALRSRKQG. Phosphoserine occurs at positions 565, 566, and 590. The tract at residues 571 to 619 is disordered; the sequence is RKLQGTEPRPSSSNMKRAASLNYLNQPNAAPLQTSRGLSASTVDLSSSS. The segment covering 592 to 608 has biased composition (polar residues); that stretch reads NYLNQPNAAPLQTSRGL. A compositionally biased stretch (low complexity) spans 609 to 619; it reads SASTVDLSSSS. At threonine 612 the chain carries Phosphothreonine.

This sequence belongs to the kinesin light chain family. Oligomeric complex composed of two heavy chains and two light chains.

The protein localises to the cytoplasm. The protein resides in the cytoskeleton. Functionally, kinesin is a microtubule-associated force-producing protein that may play a role in organelle transport. The light chain may function in coupling of cargo to the heavy chain or in the modulation of its ATPase activity. The protein is Kinesin light chain 4 (Klc4) of Rattus norvegicus (Rat).